The sequence spans 171 residues: uncharacterized protein (171 aa).

The protein belongs to the HHV-5 UL128 protein family. As to quaternary structure, forms the envelope pentamer complex (PC) composed of gH, gL, UL128, UL130, and UL131A. The pentamer interacts with host NRP2.

Its subcellular location is the virion membrane. Functionally, plays a role in viral entry into host cells. Forms a pentameric complex at the surface of the viral envelope together with gH, gL, UL130 and UL131. This complex is required for entry in epithelial, endothelial and myeloid host cells. Mechanistically, engages host receptor(s) including neurophilin 2/NRP2 to mediate infection. Additionally, monomeric UL128 may interfere with certain inflammatory cytokines to increase infection and dissemination by blocking monocytes migration. This is an uncharacterized protein from Human cytomegalovirus (strain AD169) (HHV-5).